The following is a 269-amino-acid chain: 4-hydroxy-tetrahydrodipicolinate reductase (269 aa).

Residues Gly8 to Met13 and Glu34 each bind NAD(+). Residue Arg35 participates in NADP(+) binding. Residues Gly98–Thr100 and Ala122–Tyr125 each bind NAD(+). The active-site Proton donor/acceptor is the His155. Residue His156 coordinates (S)-2,3,4,5-tetrahydrodipicolinate. The active-site Proton donor is the Lys159. Gly165–Thr166 contributes to the (S)-2,3,4,5-tetrahydrodipicolinate binding site.

The protein belongs to the DapB family.

It localises to the cytoplasm. It carries out the reaction (S)-2,3,4,5-tetrahydrodipicolinate + NAD(+) + H2O = (2S,4S)-4-hydroxy-2,3,4,5-tetrahydrodipicolinate + NADH + H(+). The enzyme catalyses (S)-2,3,4,5-tetrahydrodipicolinate + NADP(+) + H2O = (2S,4S)-4-hydroxy-2,3,4,5-tetrahydrodipicolinate + NADPH + H(+). It functions in the pathway amino-acid biosynthesis; L-lysine biosynthesis via DAP pathway; (S)-tetrahydrodipicolinate from L-aspartate: step 4/4. Catalyzes the conversion of 4-hydroxy-tetrahydrodipicolinate (HTPA) to tetrahydrodipicolinate. This chain is 4-hydroxy-tetrahydrodipicolinate reductase, found in Vibrio vulnificus (strain YJ016).